Reading from the N-terminus, the 315-residue chain is Porphobilinogen deaminase (315 aa).

An S-(dipyrrolylmethanemethyl)cysteine modification is found at cysteine 234.

This sequence belongs to the HMBS family. In terms of assembly, monomer. Dipyrromethane serves as cofactor.

It catalyses the reaction 4 porphobilinogen + H2O = hydroxymethylbilane + 4 NH4(+). Its pathway is porphyrin-containing compound metabolism; protoporphyrin-IX biosynthesis; coproporphyrinogen-III from 5-aminolevulinate: step 2/4. Tetrapolymerization of the monopyrrole PBG into the hydroxymethylbilane pre-uroporphyrinogen in several discrete steps. The sequence is that of Porphobilinogen deaminase from Mycobacterium avium (strain 104).